A 681-amino-acid polypeptide reads, in one-letter code: MAMPGKSSHAPSRLLLALLTLILLALPARPEPLAAPDAALAQALFGADGPVVLDRRETPVPGWGVSRDGRMLGVIGSTWEIAATTGYSGKPLDVLVAVTPQGVIAGARLVRQTEPVLSLGISEAHIAAYVDGFRGVDLSQGEGQGRALPDVISRATVSTGVIRDGILRSARVLAQAQGLGGGGIDRVGYRPATWADLLAEGAFGHALVSMADAARAFAGAKVPVEPSDAPFLDLYAGLIDPPTVGRNLLGAQDFTAAAGALQPGQALVAVLSRGLYSPRGTEWRRSGRFERIAFEQGALRIEPDDGDFVMVEKLALPDAPAFKEISLFRLNIDPLAGGIDPRRPFDLVVTATRPLAAGDEAALPIRATIRLPEAYAVAEAPAVPLWQEFWLKKIPGIAVVAAMLFVLALILFGQEALVRRPMLWRRVRLGFLATTLVVLGWGLNGQLSVVQVVAFLNALLSGFRWETFLIEPIIFLIWSAVALGLLFWGRGVFCGWLCPFGALQELANAAAQRLGVRQIAVPQALHERLWVIKYTLFVAIVALSFYSMEQALILAEVEPFKTVISMRFLRAWPFVLFALAVLAGGLFIERFYCRYLCPLGAGLAIPAKLKIFDWLRRRPQCGRECRLCETKCTVGAIDPLGRINPNECVLCLRCQVVMNDPGTCPVLKRRARSAAPTGDAP.

A signal peptide spans 1–30; sequence MAMPGKSSHAPSRLLLALLTLILLALPARP. 5 helical membrane passes run 394–414, 436–456, 468–488, 535–555, and 568–588; these read IPGI…LFGQ, LVVL…VAFL, FLIE…LLFW, TLFV…LILA, and FLRA…GLFI.

This sequence to P.stutzeri NosR.

It is found in the cell membrane. The polypeptide is Protein NirI (nirI) (Paracoccus denitrificans (strain Pd 1222)).